The chain runs to 705 residues: 1,4-alpha-glucan branching enzyme GlgB (705 aa).

D393 (nucleophile) is an active-site residue. E446 acts as the Proton donor in catalysis.

The protein belongs to the glycosyl hydrolase 13 family. GlgB subfamily. Monomer.

The catalysed reaction is Transfers a segment of a (1-&gt;4)-alpha-D-glucan chain to a primary hydroxy group in a similar glucan chain.. It participates in glycan biosynthesis; glycogen biosynthesis. Functionally, catalyzes the formation of the alpha-1,6-glucosidic linkages in glycogen by scission of a 1,4-alpha-linked oligosaccharide from growing alpha-1,4-glucan chains and the subsequent attachment of the oligosaccharide to the alpha-1,6 position. This is 1,4-alpha-glucan branching enzyme GlgB from Picrophilus torridus (strain ATCC 700027 / DSM 9790 / JCM 10055 / NBRC 100828 / KAW 2/3).